The primary structure comprises 130 residues: C-C motif chemokine 28 (130 aa).

A signal peptide spans 1-16; the sequence is MQQAGLTLMAVAVCVA. 2 cysteine pairs are disulfide-bonded: Cys30–Cys58 and Cys31–Cys73. N-linked (GlcNAc...) asparagine glycosylation occurs at Asn78. The disordered stretch occupies residues 92-130; the sequence is KNGRENVCSGKKQPSRKDRKGHTTRKHRTRGTHRHEASR. The span at 104 to 124 shows a compositional bias: basic residues; that stretch reads QPSRKDRKGHTTRKHRTRGTH.

This sequence belongs to the intercrine beta (chemokine CC) family. Mainly expressed in testis, epithelial cells of normal colon, kidney, Peyer patches, lymph nodes. Also found in lower levels in brain, spleen and lung.

The protein resides in the secreted. Chemotactic for resting CD4, CD8 T-cells and eosinophils. Binds to CCR10 and induces calcium mobilization in a dose-dependent manner. The polypeptide is C-C motif chemokine 28 (Ccl28) (Mus musculus (Mouse)).